We begin with the raw amino-acid sequence, 273 residues long: Alkaline ceramidase 1 (273 aa).

Residues 1–36 are Lumenal-facing; that stretch reads MHVPGTRAKMSSIFAYQSSEVDWCESNFQHSELVAE. The Ca(2+) site is built by aspartate 22, tryptophan 23, glutamate 25, asparagine 27, and glutamate 36. Residues 37–57 form a helical membrane-spanning segment; that stretch reads FYNTFSNVFFLIFGPLMMFLM. The Cytoplasmic segment spans residues 58–72; it reads HPYAQKRTRCFYGVS. 2 helical membrane passes run 73–93 and 94–114; these read VLFM…SFLG and QLLD…VWLP. Histidine 86 contributes to the Zn(2+) binding site. Residues 115-126 lie on the Cytoplasmic side of the membrane; it reads RCYFPKFVKGNR. A helical membrane pass occupies residues 127–147; the sequence is FYFSCLVTITTIISTFLTFVK. The Lumenal portion of the chain corresponds to 148–149; that stretch reads PT. The chain crosses the membrane as a helical span at residues 150–167; sequence VNAYALNSIAIHILYIVR. The Cytoplasmic portion of the chain corresponds to 168–177; it reads TEYKKIRDDD. Residues 178 to 198 form a helical membrane-spanning segment; sequence LRHLIAVSVVLWAAALTSWIS. The Lumenal portion of the chain corresponds to 199-215; that stretch reads DRVLCSFWQRIHFYYLH. Zn(2+)-binding residues include histidine 215 and histidine 219. A helical transmembrane segment spans residues 216 to 236; that stretch reads SIWHVLISITFPYGIVTMALV. Residues 237-273 lie on the Cytoplasmic side of the membrane; that stretch reads DAKYEMPDKTLKVHYWPRDSWVIGLPYVEIQENDKNC.

It belongs to the alkaline ceramidase family. Requires Zn(2+) as cofactor. Highly expressed in skin. Weakly or not expressed in other tissues. Expressed by granular layer of interfollicular epidermis, sebaceous glands and infundibulum.

Its subcellular location is the endoplasmic reticulum membrane. It carries out the reaction an N-acylsphing-4-enine + H2O = sphing-4-enine + a fatty acid. The enzyme catalyses N-tetracosanoyl-sphing-4-enine + H2O = tetracosanoate + sphing-4-enine. It catalyses the reaction an N-acylsphinganine + H2O = sphinganine + a fatty acid. The catalysed reaction is N-(9Z-octadecenoyl)-sphing-4-enine + H2O = sphing-4-enine + (9Z)-octadecenoate. It carries out the reaction N-(15Z-tetracosenoyl)-sphing-4-enine + H2O = (15Z)-tetracosenoate + sphing-4-enine. It participates in lipid metabolism; sphingolipid metabolism. With respect to regulation, inhibited by sphingosine. Inhibited by Mn(2+), Zn(2+), and Cu(2+) in a dose-dependent manner. Slightly activated by Ca(2+) in a dose-dependent manner. Endoplasmic reticulum ceramidase that catalyzes the hydrolysis of ceramides into sphingosine and free fatty acids at alkaline pH. Ceramides, sphingosine, and its phosphorylated form sphingosine-1-phosphate are bioactive lipids that mediate cellular signaling pathways regulating several biological processes including cell proliferation, apoptosis and differentiation. Exhibits a strong substrate specificity towards the natural stereoisomer of ceramides with D-erythro-sphingosine as a backbone and has a higher activity towards very long-chain unsaturated fatty acids like the C24:1-ceramide. May also hydrolyze dihydroceramides to produce dihydrosphingosine. ACER1 is a skin-specific ceramidase that regulates the levels of ceramides, sphingosine and sphingosine-1-phosphate in the epidermis, mediates the calcium-induced differentiation of epidermal keratinocytes and more generally plays an important role in skin homeostasis. The sequence is that of Alkaline ceramidase 1 from Mus musculus (Mouse).